The primary structure comprises 160 residues: uncharacterized protein (160 aa).

Residues 1–33 (MPLRPCRHHQGFLPKKQWRAKFPQLIVLMGRVA) are Extracellular-facing. A helical membrane pass occupies residues 34 to 54 (AEELLPAVAVAAVVVAVVVAV). The Cytoplasmic portion of the chain corresponds to 55–68 (ERVVPLLFVHRPDS). The helical transmembrane segment at 69-89 (FFLIFFFQSCFVCCCCCCSCS) threads the bilayer. The Extracellular segment spans residues 90 to 119 (TSLKAYSSEKEKQKYGKRGNGNTPLVQRLV). Residues 120-140 (TLSYLALLILVLSIELLTWFV) form a helical membrane-spanning segment. Over 141–160 (KKQRTGNKKQKDKEKNALLL) the chain is Cytoplasmic.

It is found in the membrane. This is an uncharacterized protein from Saccharomyces cerevisiae (strain ATCC 204508 / S288c) (Baker's yeast).